Here is a 363-residue protein sequence, read N- to C-terminus: 3-isopropylmalate dehydrogenase (363 aa).

An NAD(+)-binding site is contributed by 78–91 (GPKWEHLPPAEQPE). Substrate-binding residues include R99, R109, R138, and D227. D227, D251, and D255 together coordinate Mg(2+). Residue 285–297 (GSAPDIAGKNIAN) coordinates NAD(+).

The protein belongs to the isocitrate and isopropylmalate dehydrogenases family. LeuB type 1 subfamily. Homodimer. The cofactor is Mg(2+). Mn(2+) serves as cofactor.

The protein resides in the cytoplasm. It catalyses the reaction (2R,3S)-3-isopropylmalate + NAD(+) = 4-methyl-2-oxopentanoate + CO2 + NADH. It participates in amino-acid biosynthesis; L-leucine biosynthesis; L-leucine from 3-methyl-2-oxobutanoate: step 3/4. Catalyzes the oxidation of 3-carboxy-2-hydroxy-4-methylpentanoate (3-isopropylmalate) to 3-carboxy-4-methyl-2-oxopentanoate. The product decarboxylates to 4-methyl-2 oxopentanoate. This is 3-isopropylmalate dehydrogenase from Yersinia pestis.